The chain runs to 95 residues: Transcription and mRNA export factor ENY2-1 (95 aa).

Belongs to the ENY2 family. As to quaternary structure, component of the nuclear pore complex (NPC)-associated TREX-2 complex (transcription and export complex 2). Component of the SAGA transcription coactivator-HAT complex. Within the SAGA complex, participates in a subcomplex of SAGA called the DUB module (deubiquitination module).

The protein localises to the nucleus. The protein resides in the nucleoplasm. Its function is as follows. Involved in mRNA export coupled transcription activation by association with both the TREX-2 and the SAGA complexes. The transcription regulatory histone acetylation (HAT) complex SAGA is a multiprotein complex that activates transcription by remodeling chromatin and mediating histone acetylation and deubiquitination. Within the SAGA complex, participates in a subcomplex that specifically deubiquitinates histones. The SAGA complex is recruited to specific gene promoters by activators, where it is required for transcription. The TREX-2 complex functions in docking export-competent ribonucleoprotein particles (mRNPs) to the nuclear entrance of the nuclear pore complex (nuclear basket). TREX-2 participates in mRNA export and accurate chromatin positioning in the nucleus by tethering genes to the nuclear periphery. The sequence is that of Transcription and mRNA export factor ENY2-1 (eny2-1) from Salmo salar (Atlantic salmon).